The chain runs to 1745 residues: ADAMTS-like protein 1 (1745 aa).

Positions 1-28 (MECCRRAAPGTPLLVLAFLLLSSRTARS) are cleaved as a signal peptide. Residues 33 to 82 (EGLWDAWGPWSECSRTCGGGASYSLRRCLSSKSCEGRNIRYRTCSNVDCP) form the TSP type-1 1 domain. 3 disulfide bridges follow: Cys-45–Cys-76, Cys-49–Cys-81, and Cys-60–Cys-66. N-linked (GlcNAc...) asparagine glycosylation is present at Asn-251. O-linked (Fuc...) serine glycosylation is found at Ser-310 and Ser-391. 6 TSP type-1 domains span residues 376–424 (PLPR…MYTP), 436–493 (DCPK…TPCY), 522–584 (EEPS…GPCN), 607–667 (ELYD…DPCP), 703–762 (CPPA…KKDD), and 763–825 (CPSE…ATCA). Thr-451 carries O-linked (Fuc...) threonine glycosylation. 3 disulfides stabilise this stretch: Cys-534/Cys-578, Cys-538/Cys-583, and Cys-549/Cys-567. 4 disulfides stabilise this stretch: Cys-775–Cys-819, Cys-779–Cys-824, Cys-790–Cys-807, and Cys-874–Cys-922. One can recognise an Ig-like C2-type 1 domain in the interval 836-938 (PHIAAARNIY…EQFVIKLIGG (103 aa)). 2 disordered regions span residues 966 to 991 (EALQTHKHQNGIFSNGSKAEKRGLTA) and 1114 to 1137 (VSGFSSSLRSSSGEAGGGSRRPHR). Residues 1115 to 1126 (SGFSSSLRSSSG) are compositionally biased toward low complexity. 3 consecutive Ig-like C2-type domains span residues 1139-1241 (PAIL…IAVT), 1261-1352 (PTVT…TQLL), and 1378-1468 (PSVL…ASLV). Disulfide bonds link Cys-1177–Cys-1225, Cys-1283–Cys-1336, and Cys-1401–Cys-1452. TSP type-1 domains lie at 1528-1591 (CPSR…QLCV) and 1649-1709 (CSVH…TPCE). One can recognise a PLAC domain in the interval 1709–1745 (ENTECRDTTRYCEKVRQLKLCQLGQFRSRCCGTCGKA).

As to quaternary structure, monomer. Glycosylated. O-fucosylated by POFUT2 on a serine or a threonine residue found within the consensus sequence C1-X(2)-(S/T)-C2-G of the TSP type-1 repeat domains where C1 and C2 are the first and second cysteine residue of the repeat, respectively. Fucosylated repeats can then be further glycosylated by the addition of a beta-1,3-glucose residue by the glucosyltransferase, B3GALTL. Fucosylation mediates the efficient secretion of ADAMTS family members. Can also be C-glycosylated with one or two mannose molecules on tryptophan residues within the consensus sequence W-X-X-W of the TPRs, and N-glycosylated. These other glycosylations can also facilitate secretion. In terms of processing, disulfide bonds are present.

The protein localises to the secreted. Its subcellular location is the extracellular space. It is found in the extracellular matrix. This is ADAMTS-like protein 1 (Adamtsl1) from Mus musculus (Mouse).